Reading from the N-terminus, the 124-residue chain is Fluoride-specific ion channel FluC (124 aa).

A run of 4 helical transmembrane segments spans residues 4–24 (LLFV…MSII), 35–55 (FGTL…YALG), 62–82 (PELK…FSTF), and 95–115 (WFKS…MVYL). Residues Gly-74 and Thr-77 each contribute to the Na(+) site.

The protein belongs to the fluoride channel Fluc/FEX (TC 1.A.43) family.

Its subcellular location is the cell inner membrane. It catalyses the reaction fluoride(in) = fluoride(out). Its activity is regulated as follows. Na(+) is not transported, but it plays an essential structural role and its presence is essential for fluoride channel function. In terms of biological role, fluoride-specific ion channel. Important for reducing fluoride concentration in the cell, thus reducing its toxicity. The protein is Fluoride-specific ion channel FluC of Shewanella denitrificans (strain OS217 / ATCC BAA-1090 / DSM 15013).